The sequence spans 225 residues: Orotate phosphoribosyltransferase (225 aa).

Position 31 (K31) interacts with 5-phospho-alpha-D-ribose 1-diphosphate. An orotate-binding site is contributed by 39–40; that stretch reads FF. 5-phospho-alpha-D-ribose 1-diphosphate-binding positions include 78-79, R105, K106, K109, H111, and 130-138; these read YK and DDVLTSGKA. Orotate-binding residues include T134 and R163.

The protein belongs to the purine/pyrimidine phosphoribosyltransferase family. PyrE subfamily. In terms of assembly, homodimer.

It carries out the reaction orotidine 5'-phosphate + diphosphate = orotate + 5-phospho-alpha-D-ribose 1-diphosphate. Its pathway is pyrimidine metabolism; UMP biosynthesis via de novo pathway; UMP from orotate: step 1/2. In terms of biological role, catalyzes the transfer of a ribosyl phosphate group from 5-phosphoribose 1-diphosphate to orotate, leading to the formation of orotidine monophosphate (OMP). The sequence is that of Orotate phosphoribosyltransferase (URA5) from Cryptococcus neoformans var. grubii serotype A (strain H99 / ATCC 208821 / CBS 10515 / FGSC 9487) (Filobasidiella neoformans var. grubii).